Consider the following 345-residue polypeptide: Transcriptional activator hacA (345 aa).

A disordered region spans residues 1–106 (MSCDMEKTMS…AQTSRERKRL (106 aa)). Polar residues predominate over residues 30-40 (PADTSLNSADV). 2 stretches are compositionally biased toward basic and acidic residues: residues 41 to 51 (KTQEVKPEEKK) and 77 to 91 (KTED…ERVL). The bZIP domain maps to 83–146 (EQRRIERVLR…NRLSQQLAQL (64 aa)). The interval 85 to 138 (RRIERVLRNRAAAQTSRERKRLEMEKLENEKIQMEQQNQFLLQRLSQMEAENNR) is basic motif. The tract at residues 139 to 146 (LSQQLAQL) is leucine-zipper. Positions 186–210 (RIPFPTPSLSDYSPTLKPSTLAESS) are disordered. Residues 192–210 (PSLSDYSPTLKPSTLAESS) show a composition bias toward polar residues.

The protein belongs to the bZIP family. Homodimer.

It localises to the nucleus. Its function is as follows. Transcriptional activator involved in the unfolded protein response (UPR) pathway. Recognizes and binds to the UPR element (UPRE) in the promoter of UPR-regulated genes. Increases the synthesis of endoplasmic reticulum-resident proteins required for protein folding as well as components of the secretory pathway. This Aspergillus oryzae (strain ATCC 42149 / RIB 40) (Yellow koji mold) protein is Transcriptional activator hacA (hacA).